The chain runs to 142 residues: Putative pre-16S rRNA nuclease (142 aa).

It belongs to the YqgF nuclease family.

The protein localises to the cytoplasm. Functionally, could be a nuclease involved in processing of the 5'-end of pre-16S rRNA. This is Putative pre-16S rRNA nuclease from Lactobacillus delbrueckii subsp. bulgaricus (strain ATCC 11842 / DSM 20081 / BCRC 10696 / JCM 1002 / NBRC 13953 / NCIMB 11778 / NCTC 12712 / WDCM 00102 / Lb 14).